We begin with the raw amino-acid sequence, 192 residues long: MASRGKTETNKLKVNIEEQLNRLLAQLQDIEELKEDITQEEYDETKKDTLEQMKEFEQSLKKMMSGDMTLVSELGGVQLAIQAAVSQAFKTPEVIKLFAKKDQNSLRTKLGNIQRDVQLGKISKDAYIDQSVEILAALKKLDFVLSPEEEAFLEKHKSRSMSEFEKVSSNIGQGTKENILSSAASQIKNASK.

Positions 6-65 form a coiled coil; sequence KTETNKLKVNIEEQLNRLLAQLQDIEELKEDITQEEYDETKKDTLEQMKEFEQSLKKMMS.

It belongs to the CTNNBIP1 family.

This Dictyostelium discoideum (Social amoeba) protein is Protein LZIC (lzic).